The sequence spans 376 residues: Chaperone protein DnaJ (376 aa).

Residues 5–70 (DYYEVLGVGR…DKKAAYDQFG (66 aa)) form the J domain. The segment at 132–210 (GLTKELRIPT…CHGEGRVEKS (79 aa)) adopts a CR-type zinc-finger fold. Positions 145, 148, 162, 165, 184, 187, 198, and 201 each coordinate Zn(2+). 4 CXXCXGXG motif repeats span residues 145–152 (CDLCDGSG), 162–169 (CGTCHGQG), 184–191 (CPTCHGRG), and 198–205 (CGKCHGEG).

This sequence belongs to the DnaJ family. Homodimer. It depends on Zn(2+) as a cofactor.

The protein localises to the cytoplasm. In terms of biological role, participates actively in the response to hyperosmotic and heat shock by preventing the aggregation of stress-denatured proteins and by disaggregating proteins, also in an autonomous, DnaK-independent fashion. Unfolded proteins bind initially to DnaJ; upon interaction with the DnaJ-bound protein, DnaK hydrolyzes its bound ATP, resulting in the formation of a stable complex. GrpE releases ADP from DnaK; ATP binding to DnaK triggers the release of the substrate protein, thus completing the reaction cycle. Several rounds of ATP-dependent interactions between DnaJ, DnaK and GrpE are required for fully efficient folding. Also involved, together with DnaK and GrpE, in the DNA replication of plasmids through activation of initiation proteins. This chain is Chaperone protein DnaJ, found in Shewanella loihica (strain ATCC BAA-1088 / PV-4).